The following is a 689-amino-acid chain: uncharacterized protein (689 aa).

Disordered regions lie at residues 121–206, 286–305, 322–414, and 552–611; these read LALK…VDPS, ASSN…PMDN, NSYS…SMAH, and AAMP…HLSD. The segment covering 133–158 has biased composition (low complexity); sequence SPNNSIPLMANSCLLSADNSSSSTTS. A compositionally biased stretch (polar residues) spans 322 to 380; the sequence is NSYSYDRYTPNQPSYLESKPGNHQPSYTSEQPMYSTASVPQQISNGPTAVNGLPMNSYT. Composition is skewed to low complexity over residues 381–411 and 560–572; these read PHSN…SSPS and PSAH…PSPH.

It localises to the cytoplasm. This is an uncharacterized protein from Schizosaccharomyces pombe (strain 972 / ATCC 24843) (Fission yeast).